Here is a 603-residue protein sequence, read N- to C-terminus: Pyruvate oxidase (603 aa).

The core stretch occupies residues 1–191 (MVMKQTKQTN…WYASANSYQT (191 aa)). The tract at residues 192–342 (PLLPEPDVQA…ILAQVSERES (151 aa)) is FAD-binding. The thiamine pyrophosphate binding stretch occupies residues 343 to 603 (TPWWQANLAN…LQHQIGQGGF (261 aa)). Residues aspartate 447, asparagine 474, and glutamine 476 each coordinate Mg(2+).

It belongs to the TPP enzyme family. Homotetramer. FAD is required as a cofactor. Requires Mg(2+) as cofactor. The cofactor is thiamine diphosphate.

It carries out the reaction pyruvate + phosphate + O2 + H(+) = acetyl phosphate + H2O2 + CO2. Its function is as follows. Important for the aerobic growth. Decarboxylates pyruvate in four steps. The energy released is partially stored in acetyl phosphate. The sequence is that of Pyruvate oxidase (pox5) from Lactiplantibacillus plantarum (strain ATCC BAA-793 / NCIMB 8826 / WCFS1) (Lactobacillus plantarum).